Here is a 234-residue protein sequence, read N- to C-terminus: Small ribosomal subunit protein uS5 (234 aa).

Polar residues predominate over residues 1-10; the sequence is MEDIKTTTPE. Residues 1-69 are disordered; the sequence is MEDIKTTTPE…KDGSGNKPNK (69 aa). Over residues 11-31 the composition is skewed to basic and acidic residues; that stretch reads VKNEENKTSEVKEGKALEKNN. The 64-residue stretch at 78-141 folds into the S5 DRBM domain; it reads LEEKIVGVKK…KSAKNNMYKV (64 aa).

Belongs to the universal ribosomal protein uS5 family. Part of the 30S ribosomal subunit. Contacts proteins S4 and S8.

Its function is as follows. With S4 and S12 plays an important role in translational accuracy. Functionally, located at the back of the 30S subunit body where it stabilizes the conformation of the head with respect to the body. This Malacoplasma penetrans (strain HF-2) (Mycoplasma penetrans) protein is Small ribosomal subunit protein uS5.